Consider the following 227-residue polypeptide: Ribose-5-phosphate isomerase A (227 aa).

Substrate contacts are provided by residues threonine 26–threonine 29, aspartate 82–aspartate 85, and lysine 95–glycine 98. The active-site Proton acceptor is glutamate 104. Lysine 122 lines the substrate pocket.

The protein belongs to the ribose 5-phosphate isomerase family. Homodimer.

It catalyses the reaction aldehydo-D-ribose 5-phosphate = D-ribulose 5-phosphate. It participates in carbohydrate degradation; pentose phosphate pathway; D-ribose 5-phosphate from D-ribulose 5-phosphate (non-oxidative stage): step 1/1. In terms of biological role, catalyzes the reversible conversion of ribose-5-phosphate to ribulose 5-phosphate. The polypeptide is Ribose-5-phosphate isomerase A (Streptococcus equi subsp. zooepidemicus (strain H70)).